A 67-amino-acid polypeptide reads, in one-letter code: Beta-defensin 14 (67 aa).

Positions 1–22 (MRLHYLLFVFLILFLVPAPGDA) are cleaved as a signal peptide. Intrachain disulfides connect Cys33/Cys62, Cys40/Cys55, and Cys45/Cys63.

This sequence belongs to the beta-defensin family.

The protein localises to the secreted. Has antibacterial activity. In Mus musculus (Mouse), this protein is Beta-defensin 14 (Defb14).